The following is a 384-amino-acid chain: Na(+)/H(+) antiporter NhaA (384 aa).

11 helical membrane-spanning segments follow: residues 7 to 27, 58 to 78, 94 to 114, 124 to 144, 153 to 173, 179 to 199, 204 to 224, 256 to 276, 285 to 305, 325 to 345, and 357 to 377; these read FYNLETIGGILLFIAAVLAII, LLLWINDGLMAIYFLLIGLEI, LVPALTALAGLLFPALIFIFF, GWAIPTATDIAFTLGIVSLLG, ILLTAIAIFDDIAAIVIIALF, SLLSLSLALVFTLILIGLNYF, ISVFMLFGVALWIAVLKSGVH, VVFLILPLFAFANAGVSFVGL, VVLGIGLGLFLGKQLGIFLSL, VYGIALICGVGFTMSLFIGSL, and MVKIGVVFGSFIAGLTGFLVL.

Belongs to the NhaA Na(+)/H(+) (TC 2.A.33) antiporter family.

It localises to the cell inner membrane. The enzyme catalyses Na(+)(in) + 2 H(+)(out) = Na(+)(out) + 2 H(+)(in). Na(+)/H(+) antiporter that extrudes sodium in exchange for external protons. This is Na(+)/H(+) antiporter NhaA from Legionella pneumophila (strain Corby).